Reading from the N-terminus, the 68-residue chain is Phycobilisome 7.8 kDa linker polypeptide, allophycocyanin-associated, core (68 aa).

Positions 2–57 (ARLFKVTACVPSQTRIRTQRELQNTYFTKLVPFENWFREQQRIMKMGGKIVKVELA) constitute a CpcD-like domain.

The protein belongs to the phycobilisome linker protein family.

The protein resides in the cellular thylakoid membrane. Its function is as follows. Rod linker protein, associated with allophycocyanin. Linker polypeptides determine the state of aggregation and the location of the disk-shaped phycobiliprotein units within the phycobilisome and modulate their spectroscopic properties in order to mediate a directed and optimal energy transfer. The protein is Phycobilisome 7.8 kDa linker polypeptide, allophycocyanin-associated, core (apcC) of Microchaete diplosiphon (Fremyella diplosiphon).